Consider the following 346-residue polypeptide: Protein phosphatase 1 regulatory subunit 7 (346 aa).

Over residues 1–13 (MADEEGETEVQEM) the composition is skewed to acidic residues. Residues 1-46 (MADEEGETEVQEMEVDRRESDESADDEAKEKPDRVDGGVKNGEVPL) are disordered. Residues 14–37 (EVDRRESDESADDEAKEKPDRVDG) are compositionally biased toward basic and acidic residues. LRR repeat units follow at residues 63–84 (EAEDVDLNHFKIGKIQGFEVLK), 85–106 (KVKTLCLRQNLIKLIENLEQLV), 107–128 (TLTELDLYDNQIRKIGNLETLR), 129–150 (DLQILDLSFNLLRRIEGLESLS), 151–172 (HLQRLYLVNNKISRIENFGTLT), 173–194 (QLRLLELGSNRLRVIENLDSLR), 195–216 (ELDSLFLGKNKITKLQNLETLT), 217–238 (NLTVLSVQSNRLTKIEGLQNLV), 239–260 (NLRELYLSDNGIQVIEGLENNN), 261–282 (KLTTLDLASNRIKRIENIKHLS), and 283–304 (ELQEFWMNDNLVENWSDLEELS). An LRRCT domain is found at 317-346 (NPLQKDAQYRRKIMLALPSVRQIDATFVRF).

This sequence belongs to the SDS22 family.

The protein localises to the nucleus. Regulatory subunit of protein phosphatase 1. The sequence is that of Protein phosphatase 1 regulatory subunit 7 (ppp1r7) from Xenopus tropicalis (Western clawed frog).